We begin with the raw amino-acid sequence, 77 residues long: Acyl carrier protein (77 aa).

The region spanning 1 to 76 (MSIEERVKKI…SAIDYVAKAN (76 aa)) is the Carrier domain. O-(pantetheine 4'-phosphoryl)serine is present on Ser36.

The protein belongs to the acyl carrier protein (ACP) family. 4'-phosphopantetheine is transferred from CoA to a specific serine of apo-ACP by AcpS. This modification is essential for activity because fatty acids are bound in thioester linkage to the sulfhydryl of the prosthetic group.

It is found in the cytoplasm. Its pathway is lipid metabolism; fatty acid biosynthesis. Functionally, carrier of the growing fatty acid chain in fatty acid biosynthesis. The chain is Acyl carrier protein from Haemophilus ducreyi (strain 35000HP / ATCC 700724).